Consider the following 254-residue polypeptide: 5-oxoprolinase subunit A (254 aa).

Belongs to the LamB/PxpA family. As to quaternary structure, forms a complex composed of PxpA, PxpB and PxpC.

The enzyme catalyses 5-oxo-L-proline + ATP + 2 H2O = L-glutamate + ADP + phosphate + H(+). In terms of biological role, catalyzes the cleavage of 5-oxoproline to form L-glutamate coupled to the hydrolysis of ATP to ADP and inorganic phosphate. The sequence is that of 5-oxoprolinase subunit A from Burkholderia orbicola (strain MC0-3).